The sequence spans 100 residues: Transcription and mRNA export factor SUS1 (100 aa).

It belongs to the ENY2 family. In terms of assembly, component of the nuclear pore complex (NPC)-associated TREX-2 complex (transcription and export complex 2), composed of at least SUS1, SAC3, THP1, SEM1, and CDC31. TREX-2 contains 2 SUS1 chains. The TREX-2 complex interacts with the nucleoporin NUP1. Component of the 1.8 MDa SAGA transcription coactivator-HAT complex. SAGA is built of 5 distinct domains with specialized functions. Within the SAGA complex, SUS1, SGF11, SGF73 and UBP8 form an additional subcomplex of SAGA called the DUB module (deubiquitination module). Interacts directly with THP1, SAC3, SGF11, and with the RNA polymerase II.

It localises to the nucleus. Its subcellular location is the nucleoplasm. It is found in the cytoplasm. The protein resides in the P-body. In terms of biological role, involved in mRNA export coupled transcription activation by association with both the TREX-2 and the SAGA complexes. At the promoters, SAGA is required for recruitment of the basal transcription machinery. It influences RNA polymerase II transcriptional activity through different activities such as TBP interaction and promoter selectivity, interaction with transcription activators, and chromatin modification through histone acetylation and deubiquitination. Within the SAGA complex, participates in a subcomplex required for deubiquitination of H2B and for the maintenance of steady-state H3 methylation levels. The TREX-2 complex functions in docking export-competent ribonucleoprotein particles (mRNPs) to the nuclear entrance of the nuclear pore complex (nuclear basket). TREX-2 participates in mRNA export and accurate chromatin positioning in the nucleus by tethering genes to the nuclear periphery. May also be involved in cytoplasmic mRNA decay by interaction with components of P-bodies. The protein is Transcription and mRNA export factor SUS1 of Candida glabrata (strain ATCC 2001 / BCRC 20586 / JCM 3761 / NBRC 0622 / NRRL Y-65 / CBS 138) (Yeast).